A 369-amino-acid polypeptide reads, in one-letter code: MKFIDEAKIEVIAGDGGNGVASFCREKFRPFGGPDGGDGGKGGSIWAVADRNINTLVDFRYSKMHKARDGENGRGADCYGKGADDIKLRMPVGTLIIDNNDGELIADLTEHGQEVLIAKGGEGGWGNIHFKSSTNRAPRQKSEGKEGERRELRLELKVLADIGLLGMPNAGKSTFISAVSNARPKIADYPFTTLHPNLGVVRVSHEKSFVIADIPGLIEGASDGAGLGIQFLRHLQRTRLLLHIVDLAPFDNVDPVKEAKAIVKELKKYDESLFDKPRWLVLNKLDMVPEEERKKRVKDFIKRFGWKGPVFEISALTHEGCSELVTEIYDYIAVQRQAEQRSEETPQMVEAARGIDSIDPDDPRFKIID.

Positions Met1–Leu159 constitute an Obg domain. The disordered stretch occupies residues Ile128–Glu148. The 174-residue stretch at Ala160–Ala333 folds into the OBG-type G domain. Residues Gly166–Ser173, Phe191–His195, Asp213–Gly216, Asn283–Asp286, and Ser314–Leu316 each bind GTP. Residues Ser173 and Thr193 each contribute to the Mg(2+) site.

It belongs to the TRAFAC class OBG-HflX-like GTPase superfamily. OBG GTPase family. As to quaternary structure, monomer. It depends on Mg(2+) as a cofactor.

The protein localises to the cytoplasm. In terms of biological role, an essential GTPase which binds GTP, GDP and possibly (p)ppGpp with moderate affinity, with high nucleotide exchange rates and a fairly low GTP hydrolysis rate. Plays a role in control of the cell cycle, stress response, ribosome biogenesis and in those bacteria that undergo differentiation, in morphogenesis control. The protein is GTPase Obg of Herminiimonas arsenicoxydans.